Here is a 46-residue protein sequence, read N- to C-terminus: uncharacterized protein (46 aa).

This is an uncharacterized protein from Bacillus subtilis (strain 168).